The following is a 492-amino-acid chain: Homoserine O-acetyltransferase (492 aa).

One can recognise an AB hydrolase-1 domain in the interval 47 to 354; the sequence is NVILVCHALT…NYGHDAFLLE (308 aa). The Nucleophile role is filled by Ser152. Arg221 is a substrate binding site. Active-site residues include Asp315 and His348. A substrate-binding site is contributed by Asp349. 2 CBS domains span residues 375–432 and 436–492; these read MKLD…FTTL and LTKN…HRCT.

This sequence belongs to the AB hydrolase superfamily. MetX family. Homodimer.

The protein resides in the cytoplasm. It carries out the reaction L-homoserine + acetyl-CoA = O-acetyl-L-homoserine + CoA. Its pathway is amino-acid biosynthesis; L-methionine biosynthesis via de novo pathway; O-acetyl-L-homoserine from L-homoserine: step 1/1. In terms of biological role, transfers an acetyl group from acetyl-CoA to L-homoserine, forming acetyl-L-homoserine. The polypeptide is Homoserine O-acetyltransferase (Methanosalsum zhilinae (strain DSM 4017 / NBRC 107636 / OCM 62 / WeN5) (Methanohalophilus zhilinae)).